Reading from the N-terminus, the 214-residue chain is Large ribosomal subunit protein uL16 (214 aa).

At Arg32 the chain carries Citrulline. Lys175 participates in a covalent cross-link: Glycyl lysine isopeptide (Lys-Gly) (interchain with G-Cter in SUMO2). Residue Lys188 forms a Glycyl lysine isopeptide (Lys-Gly) (interchain with G-Cter in ubiquitin) linkage.

The protein belongs to the universal ribosomal protein uL16 family. Component of the large ribosomal subunit. Mature ribosomes consist of a small (40S) and a large (60S) subunit. The 40S subunit contains about 33 different proteins and 1 molecule of RNA (18S). The 60S subunit contains about 49 different proteins and 3 molecules of RNA (28S, 5.8S and 5S). Citrullinated by PADI4. Post-translationally, ufmylated by UFL1.

Its subcellular location is the cytoplasm. Functionally, component of the large ribosomal subunit. Plays a role in the formation of actively translating ribosomes. May play a role in the embryonic brain development. This Rattus norvegicus (Rat) protein is Large ribosomal subunit protein uL16.